The following is a 452-amino-acid chain: UDP-N-acetylmuramoylalanine--D-glutamate ligase (452 aa).

115-121 (GTNGKTT) is a binding site for ATP.

Belongs to the MurCDEF family.

Its subcellular location is the cytoplasm. The catalysed reaction is UDP-N-acetyl-alpha-D-muramoyl-L-alanine + D-glutamate + ATP = UDP-N-acetyl-alpha-D-muramoyl-L-alanyl-D-glutamate + ADP + phosphate + H(+). The protein operates within cell wall biogenesis; peptidoglycan biosynthesis. In terms of biological role, cell wall formation. Catalyzes the addition of glutamate to the nucleotide precursor UDP-N-acetylmuramoyl-L-alanine (UMA). In Geobacter metallireducens (strain ATCC 53774 / DSM 7210 / GS-15), this protein is UDP-N-acetylmuramoylalanine--D-glutamate ligase.